The primary structure comprises 58 residues: Preprotein translocase subunit SecG (58 aa).

At Met-1–Ser-33 the chain is on the cytoplasmic side. A helical membrane pass occupies residues Pro-34 to Leu-55. The Extracellular portion of the chain corresponds to Pro-56–Pro-58.

Belongs to the SEC61-beta family. In terms of assembly, component of the protein translocase complex. Heterotrimer consisting of alpha (SecY), beta (SecG) and gamma (SecE) subunits. Can form oligomers of the heterotrimer.

It localises to the cell membrane. In terms of biological role, involved in protein export. The function of the beta subunit is unknown, but it may be involved in stabilization of the trimeric complex. This chain is Preprotein translocase subunit SecG, found in Pyrobaculum calidifontis (strain DSM 21063 / JCM 11548 / VA1).